The primary structure comprises 91 residues: LSCGDVATQLAPCINYLRSAGPLPVACCNGVKNLKNSAATTQDRRTACKCLINASKSISGVNFGLAAGLPGKCGVNIPYKISPSTNCDQVN.

Intrachain disulfides connect Cys-3–Cys-50, Cys-13–Cys-27, Cys-28–Cys-73, and Cys-48–Cys-87.

The protein resides in the secreted. Functionally, plant non-specific lipid-transfer proteins transfer phospholipids as well as galactolipids across membranes. May play a role in wax or cutin deposition in the cell walls of expanding epidermal cells and certain secretory tissues. The chain is Non-specific lipid-transfer protein P5 from Vitis sp. (Grape).